Reading from the N-terminus, the 278-residue chain is HTH-type transcriptional activator RhaS (278 aa).

An HTH araC/xylS-type domain is found at 174 to 272; that stretch reads NQLMAWLEEH…NWSPRDIRQG (99 aa). 2 consecutive DNA-binding regions (H-T-H motif) follow at residues 191–212 and 239–262; these read EAVA…KQHT and VTEI…RREF.

In terms of assembly, binds DNA as a dimer.

The protein resides in the cytoplasm. Its function is as follows. Activates expression of the rhaBAD and rhaT operons. The protein is HTH-type transcriptional activator RhaS of Salmonella schwarzengrund (strain CVM19633).